A 312-amino-acid polypeptide reads, in one-letter code: Methionyl-tRNA formyltransferase (312 aa).

109–112 contacts (6S)-5,6,7,8-tetrahydrofolate; it reads SLLP.

This sequence belongs to the Fmt family.

It carries out the reaction L-methionyl-tRNA(fMet) + (6R)-10-formyltetrahydrofolate = N-formyl-L-methionyl-tRNA(fMet) + (6S)-5,6,7,8-tetrahydrofolate + H(+). In terms of biological role, attaches a formyl group to the free amino group of methionyl-tRNA(fMet). The formyl group appears to play a dual role in the initiator identity of N-formylmethionyl-tRNA by promoting its recognition by IF2 and preventing the misappropriation of this tRNA by the elongation apparatus. This chain is Methionyl-tRNA formyltransferase, found in Listeria monocytogenes serovar 1/2a (strain ATCC BAA-679 / EGD-e).